A 230-amino-acid chain; its full sequence is Uracil-DNA glycosylase (230 aa).

Catalysis depends on Asp-70, which acts as the Proton acceptor.

This sequence belongs to the uracil-DNA glycosylase (UDG) superfamily. UNG family.

The protein resides in the cytoplasm. It carries out the reaction Hydrolyzes single-stranded DNA or mismatched double-stranded DNA and polynucleotides, releasing free uracil.. Its function is as follows. Excises uracil residues from the DNA which can arise as a result of misincorporation of dUMP residues by DNA polymerase or due to deamination of cytosine. The chain is Uracil-DNA glycosylase from Pseudomonas syringae pv. tomato (strain ATCC BAA-871 / DC3000).